A 776-amino-acid chain; its full sequence is Meiotic expression up-regulated protein 1/2 (776 aa).

5 coiled-coil regions span residues 87-122 (YVLK…AQEE), 173-227 (FSEL…DLKE), 265-307 (YKVE…NDEE), 362-430 (KMSQ…RNNS), and 496-595 (INNQ…NTEL).

The sequence is that of Meiotic expression up-regulated protein 1/2 (meu1) from Schizosaccharomyces pombe (strain 972 / ATCC 24843) (Fission yeast).